The following is a 318-amino-acid chain: Decaprenyl-phosphate phosphoribosyltransferase (318 aa).

2 consecutive transmembrane segments (helical) span residues 33–53 (WIKNLLVLAAPLAAVGSGIEY) and 59–79 (AAKVSVAFVVFCLAASSIYLI). 5-phospho-alpha-D-ribose 1-diphosphate-binding residues include K35 and Y77. The Mg(2+) site is built by N80 and D84. K94 contacts 5-phospho-alpha-D-ribose 1-diphosphate. A run of 2 helical transmembrane segments spans residues 99–119 (IAAGVVPEWMAYSLAGLLAVA) and 121–141 (LVISWWLTANLAIVMAVYIAV). 5-phospho-alpha-D-ribose 1-diphosphate contacts are provided by K150 and R167. 2 helical membrane-spanning segments follow: residues 153-173 (AVLDICIVSSGFLIRAIAGGV) and 177-197 (IPLSQWFLLVMAFGSLFMAAG). A trans,octa-cis-decaprenyl phosphate-binding site is contributed by K198. 3 helical membrane passes run 225–245 (LRFVWTLSATAMVVCYGLWAF), 262–282 (SWYAVTMIPFTIAILRYAVDI), and 298–318 (RVLQILFLAWIGTIGAAIYFS).

Belongs to the UbiA prenyltransferase family. DPPR synthase subfamily. Requires Mg(2+) as cofactor.

The protein localises to the cell inner membrane. The catalysed reaction is trans,octa-cis-decaprenyl phosphate + 5-phospho-alpha-D-ribose 1-diphosphate + H(+) = trans,octa-cis-decaprenylphospho-beta-D-ribofuranose 5-phosphate + diphosphate. Its pathway is cell wall biogenesis; cell wall polysaccharide biosynthesis. In terms of biological role, involved in the biosynthesis of decaprenylphosphoryl arabinose (DPA) a precursor for arabinan synthesis in mycobacterial cell wall biosynthesis. Catalyzes the transfer of a 5-phosphoribosyl residue from phosphoribose diphosphate (PRPP) to decaprenyl phosphate (DP) to form decaprenylphosphoryl-5-phosphoribose (DPPR). The sequence is that of Decaprenyl-phosphate phosphoribosyltransferase from Mycolicibacterium smegmatis (strain ATCC 700084 / mc(2)155) (Mycobacterium smegmatis).